Consider the following 930-residue polypeptide: Inter-alpha-trypsin inhibitor heavy chain H4 (930 aa).

Positions 1–28 are cleaved as a signal peptide; sequence MKPPRPVRTCSKVLVLLSLLAIHQTTTA. Residues 29–148 enclose the VIT domain; sequence EKNGIDIYSL…KITFELVYEE (120 aa). 2 N-linked (GlcNAc...) asparagine glycosylation sites follow: Asn-81 and Asn-207. A VWFA domain is found at 272 to 432; the sequence is PKNVVFVIDK…YAFLEKLALD (161 aa). A glycan (N-linked (GlcNAc...) asparagine; atypical) is linked at Asn-274. 2 N-linked (GlcNAc...) asparagine glycosylation sites follow: Asn-517 and Asn-577. The segment at 595–618 is disordered; it reads KPDDQEQSQVAEKPMEGESRNRNV. Residues 658–688 are proline-rich (PRR) potential bioactive peptide; sequence MNFRPGVLSSRQLGLPGPPDVPDHAAYHPFR. Residues 662-688 constitute a propeptide, potentially active peptide; the sequence is PGVLSSRQLGLPGPPDVPDHAAYHPFR. 3 O-linked (GalNAc...) threonine glycosylation sites follow: Thr-719, Thr-720, and Thr-722. The segment at 719–725 is O-glycosylated at three sites; sequence TTMTTQT. Cys-747 and Cys-925 are oxidised to a cystine.

This sequence belongs to the ITIH family. In terms of assembly, interacts (via C-terminus) with DNAJC1 (via SANT 2 domain); this interaction protects ITIH4 against cleavage by kallikrein in vitro. Cleaved by plasma kallikrein to yield 100 kDa and 35 kDa fragments, and the resulting 100 kDa fragment is further converted to a 70 kDa fragment. Post-translationally, N- and O-glycosylated. In urine, O-linked glycosylation on threonine residues in the region from Thr-719 to Thr-725 consists of core 1 or possibly core 8 glycans. Mainly Hex(HexNAc)(2), but also some Hex(3)(HexNAc)(3). N-glycosylated but not O-glycosylated in plasma. In terms of tissue distribution, liver specific.

The protein resides in the secreted. Type II acute-phase protein (APP) involved in inflammatory responses to trauma. May also play a role in liver development or regeneration. The chain is Inter-alpha-trypsin inhibitor heavy chain H4 (ITIH4) from Homo sapiens (Human).